The following is a 617-amino-acid chain: RNA polymerase sigma factor RpoD (617 aa).

The segment at 192-222 (NITNDSNENEDENEDENEDEDENSIDPELAN) is disordered. The span at 198-216 (NENEDENEDENEDEDENSI) shows a compositional bias: acidic residues. Residues 383–453 (MVEANLRLVI…TRSIADQART (71 aa)) are sigma-70 factor domain-2. The short motif at 407-410 (DLIQ) is the Interaction with polymerase core subunit RpoC element. The tract at residues 462–538 (ETINKLNRIS…DTTLELPLDS (77 aa)) is sigma-70 factor domain-3. The segment at 551–604 (VLSGLTAREAKVLRMRFGIDMNTDHTLEEVGKQFDVTRERIRQIEAKALRKLRH) is sigma-70 factor domain-4. The H-T-H motif DNA-binding region spans 577–596 (LEEVGKQFDVTRERIRQIEA).

It belongs to the sigma-70 factor family. RpoD/SigA subfamily. As to quaternary structure, interacts transiently with the RNA polymerase catalytic core.

The protein localises to the cytoplasm. Functionally, sigma factors are initiation factors that promote the attachment of RNA polymerase to specific initiation sites and are then released. This sigma factor is the primary sigma factor during exponential growth. The sequence is that of RNA polymerase sigma factor RpoD from Buchnera aphidicola subsp. Schizaphis graminum (strain Sg).